Reading from the N-terminus, the 144-residue chain is Small ribosomal subunit protein uS19 (144 aa).

Belongs to the universal ribosomal protein uS19 family.

Its function is as follows. Protein S19 forms a complex with S13 that binds strongly to the 16S ribosomal RNA. In Hyperthermus butylicus (strain DSM 5456 / JCM 9403 / PLM1-5), this protein is Small ribosomal subunit protein uS19.